The following is a 155-amino-acid chain: Ribosomal RNA large subunit methyltransferase H (155 aa).

S-adenosyl-L-methionine contacts are provided by residues leucine 72, glycine 103, and 122–127; that span reads LSKLTM.

Belongs to the RNA methyltransferase RlmH family. Homodimer.

The protein resides in the cytoplasm. The enzyme catalyses pseudouridine(1915) in 23S rRNA + S-adenosyl-L-methionine = N(3)-methylpseudouridine(1915) in 23S rRNA + S-adenosyl-L-homocysteine + H(+). Its function is as follows. Specifically methylates the pseudouridine at position 1915 (m3Psi1915) in 23S rRNA. The sequence is that of Ribosomal RNA large subunit methyltransferase H from Methylobacillus flagellatus (strain ATCC 51484 / DSM 6875 / VKM B-1610 / KT).